We begin with the raw amino-acid sequence, 338 residues long: RNA 3'-terminal phosphate cyclase (338 aa).

ATP-binding positions include glutamine 103 and 283–287 (YLADQ). The active-site Tele-AMP-histidine intermediate is the histidine 308.

The protein belongs to the RNA 3'-terminal cyclase family. Type 1 subfamily.

It localises to the cytoplasm. The catalysed reaction is a 3'-end 3'-phospho-ribonucleotide-RNA + ATP = a 3'-end 2',3'-cyclophospho-ribonucleotide-RNA + AMP + diphosphate. Functionally, catalyzes the conversion of 3'-phosphate to a 2',3'-cyclic phosphodiester at the end of RNA. The mechanism of action of the enzyme occurs in 3 steps: (A) adenylation of the enzyme by ATP; (B) transfer of adenylate to an RNA-N3'P to produce RNA-N3'PP5'A; (C) and attack of the adjacent 2'-hydroxyl on the 3'-phosphorus in the diester linkage to produce the cyclic end product. The biological role of this enzyme is unknown but it is likely to function in some aspects of cellular RNA processing. The chain is RNA 3'-terminal phosphate cyclase from Escherichia coli O45:K1 (strain S88 / ExPEC).